Reading from the N-terminus, the 361-residue chain is Ribosomal RNA large subunit methyltransferase M (361 aa).

Residues Ser187, 220–223, Asp239, Asp259, and Asp276 contribute to the S-adenosyl-L-methionine site; that span reads CPGG. Lys305 (proton acceptor) is an active-site residue.

Belongs to the class I-like SAM-binding methyltransferase superfamily. RNA methyltransferase RlmE family. RlmM subfamily. As to quaternary structure, monomer.

It is found in the cytoplasm. The catalysed reaction is cytidine(2498) in 23S rRNA + S-adenosyl-L-methionine = 2'-O-methylcytidine(2498) in 23S rRNA + S-adenosyl-L-homocysteine + H(+). Its function is as follows. Catalyzes the 2'-O-methylation at nucleotide C2498 in 23S rRNA. The protein is Ribosomal RNA large subunit methyltransferase M of Shewanella sp. (strain W3-18-1).